The chain runs to 62 residues: uncharacterized protein (62 aa).

Residues 17–37 form a helical membrane-spanning segment; that stretch reads IVFFLGLVVVLLMMINLYMLI.

Its subcellular location is the membrane. This is an uncharacterized protein from Helicobacter pylori (strain J99 / ATCC 700824) (Campylobacter pylori J99).